Here is a 319-residue protein sequence, read N- to C-terminus: Biotin synthase (319 aa).

In terms of domain architecture, Radical SAM core spans 44–273 (IHGDGIDLCS…EAKIRLAGGR (230 aa)). Residues C62, C66, and C69 each coordinate [4Fe-4S] cluster. [2Fe-2S] cluster-binding residues include S106, C138, C198, and R268.

The protein belongs to the radical SAM superfamily. Biotin synthase family. As to quaternary structure, homodimer. [4Fe-4S] cluster is required as a cofactor. It depends on [2Fe-2S] cluster as a cofactor.

The catalysed reaction is (4R,5S)-dethiobiotin + (sulfur carrier)-SH + 2 reduced [2Fe-2S]-[ferredoxin] + 2 S-adenosyl-L-methionine = (sulfur carrier)-H + biotin + 2 5'-deoxyadenosine + 2 L-methionine + 2 oxidized [2Fe-2S]-[ferredoxin]. It participates in cofactor biosynthesis; biotin biosynthesis; biotin from 7,8-diaminononanoate: step 2/2. In terms of biological role, catalyzes the conversion of dethiobiotin (DTB) to biotin by the insertion of a sulfur atom into dethiobiotin via a radical-based mechanism. This Clostridium perfringens (strain ATCC 13124 / DSM 756 / JCM 1290 / NCIMB 6125 / NCTC 8237 / Type A) protein is Biotin synthase.